The primary structure comprises 542 residues: MARYIFITGGVVSSLGKGLASAALGALLQARGYTVRLRKLDPYLNIDPGTMSPYQHGEVFVTDDGAETDLDLGHYERFTGRPAVRDDNITTGRIYRDIIAKERRGDYLGATVQVVPHVTNAIKEFILTGNEGLDFVLVEIGGTVGDIEGLPFFEAIRQLGNELPRGHAIYIHLTLLPYIPSAGELKTKPTQHSVKELRSIGIQPHILLCRTDRPIPFEERRKLGLFCNVRENAVIEARDVSSIYDVPHAYHAAGLDQEVLSAFGIEPAPKPDMSRWKAVMERIDNPEGEVTIAIVGKYTGLKDAYKSLIEALSHGGIANRVRVNLDWIESEIFEGTDPAPHLEHVHGILVPGGFGQRGAEGKMLAARFARQRKVPFFGICFGMQMAVIEAVRSLADIPLANSTEFGPTNEPVVGLMTEWMRDNELQMRAAEGDLGGTMRLGAYPALLAAGSKIAEIYGATEISERHRHRYEVNTAYREQLAEKGMIFSGLSPDGLLPEVVEFQDHPWFIGVQYHPELKSRPFAPHPLFSSFIAAAMEQSRLV.

The amidoligase domain stretch occupies residues 1–265 (MARYIFITGG…DQEVLSAFGI (265 aa)). S13 provides a ligand contact to CTP. S13 contributes to the UTP binding site. 14–19 (SLGKGL) serves as a coordination point for ATP. Y54 contributes to the L-glutamine binding site. An ATP-binding site is contributed by D71. Residues D71 and E139 each contribute to the Mg(2+) site. Residues 146-148 (DIE), 186-191 (KTKPTQ), and K222 each bind CTP. Residues 186-191 (KTKPTQ) and K222 each bind UTP. 238–240 (RDV) is an ATP binding site. Residues 291 to 541 (TIAIVGKYTG…IAAAMEQSRL (251 aa)) form the Glutamine amidotransferase type-1 domain. An L-glutamine-binding site is contributed by G353. Residue C380 is the Nucleophile; for glutamine hydrolysis of the active site. L-glutamine is bound by residues 381–384 (FGMQ), E404, and R469. Active-site residues include H514 and E516.

It belongs to the CTP synthase family. Homotetramer.

It catalyses the reaction UTP + L-glutamine + ATP + H2O = CTP + L-glutamate + ADP + phosphate + 2 H(+). The catalysed reaction is L-glutamine + H2O = L-glutamate + NH4(+). It carries out the reaction UTP + NH4(+) + ATP = CTP + ADP + phosphate + 2 H(+). It functions in the pathway pyrimidine metabolism; CTP biosynthesis via de novo pathway; CTP from UDP: step 2/2. Its activity is regulated as follows. Allosterically activated by GTP, when glutamine is the substrate; GTP has no effect on the reaction when ammonia is the substrate. The allosteric effector GTP functions by stabilizing the protein conformation that binds the tetrahedral intermediate(s) formed during glutamine hydrolysis. Inhibited by the product CTP, via allosteric rather than competitive inhibition. Its function is as follows. Catalyzes the ATP-dependent amination of UTP to CTP with either L-glutamine or ammonia as the source of nitrogen. Regulates intracellular CTP levels through interactions with the four ribonucleotide triphosphates. The sequence is that of CTP synthase from Beijerinckia indica subsp. indica (strain ATCC 9039 / DSM 1715 / NCIMB 8712).